Consider the following 936-residue polypeptide: E3 ubiquitin-protein ligase ZNRF3 (936 aa).

The interval 1–31 is disordered; it reads MRPRSGGRPGATGRRRRRLRRRPRGLRCSRL. The signal sequence occupies residues 1 to 55; it reads MRPRSGGRPGATGRRRRRLRRRPRGLRCSRLPPPPPLPLLLGLLLAAAGPGAARA. The segment covering 13–27 has biased composition (basic residues); that stretch reads GRRRRRLRRRPRGLR. Over 56 to 219 the chain is Extracellular; it reads KETAFVEVVL…PRQPTEYFDM (164 aa). Residues 220–240 traverse the membrane as a helical segment; the sequence is GIFLAFFVVVSLVCLILLVKI. Residues 241-936 are Cytoplasmic-facing; it reads KLKQRRSQNS…HSADSSSPGA (696 aa). The RING-type; atypical zinc finger occupies 293–334; it reads CAICLEKYIDGEELRVIPCTHRFHRKCVDPWLLQHHTCPHCR. Disordered regions lie at residues 608-693, 739-758, 849-875, and 892-936; these read SEAG…SPGA, LYEGSGPAGGEPQSGSSQGL, THSLGSWGGTRGPDTPRPHRGLGATRE, and CPPE…SPGA. Residues 654 to 684 show a composition bias toward polar residues; that stretch reads SGDQVSTCSLEMNYSSNSSLEHRGPNSSTSE. Over residues 913–922 the composition is skewed to low complexity; that stretch reads ESSTTATEAA.

It belongs to the ZNRF3 family. In terms of assembly, interacts with LRP6, FZD4, FZD5, FZD6 and FZD8. Interacts with RSPO1; interaction promotes indirect interaction with LGR4 and membrane clearance of ZNRF3. Also interacts with RSPO2. Interacts with LMBR1L.

The protein localises to the cell membrane. The enzyme catalyses S-ubiquitinyl-[E2 ubiquitin-conjugating enzyme]-L-cysteine + [acceptor protein]-L-lysine = [E2 ubiquitin-conjugating enzyme]-L-cysteine + N(6)-ubiquitinyl-[acceptor protein]-L-lysine.. The protein operates within protein modification; protein ubiquitination. With respect to regulation, negatively regulated by R-spondin proteins such as RSPO1: interaction with RSPO1 induces the indirect association between ZNRF3 and LGR4, promoting membrane clearance of ZNRF3. E3 ubiquitin-protein ligase that acts as a negative regulator of the Wnt signaling pathway by mediating the ubiquitination and subsequent degradation of Wnt receptor complex components Frizzled and LRP6. Acts on both canonical and non-canonical Wnt signaling pathway. Acts as a tumor suppressor in the intestinal stem cell zone by inhibiting the Wnt signaling pathway, thereby restricting the size of the intestinal stem cell zone. Along with RSPO2 and RNF43, constitutes a master switch that governs limb specification. The polypeptide is E3 ubiquitin-protein ligase ZNRF3 (ZNRF3) (Homo sapiens (Human)).